We begin with the raw amino-acid sequence, 340 residues long: Ketol-acid reductoisomerase (NADP(+)) (340 aa).

The region spanning 1–182 is the KARI N-terminal Rossmann domain; sequence MRVYYDRDCD…GGGRSGIIET (182 aa). NADP(+) contacts are provided by residues 24 to 27, R48, S51, S53, and 83 to 86; these read YGSQ and DELQ. The active site involves H108. G134 contributes to the NADP(+) binding site. The region spanning 183–329 is the KARI C-terminal knotted domain; that stretch reads NFRQECETDL…EKLRGMMPWI (147 aa). Mg(2+) contacts are provided by D191, E195, E227, and E231. A substrate-binding site is contributed by S252.

It belongs to the ketol-acid reductoisomerase family. Requires Mg(2+) as cofactor.

The enzyme catalyses (2R)-2,3-dihydroxy-3-methylbutanoate + NADP(+) = (2S)-2-acetolactate + NADPH + H(+). It carries out the reaction (2R,3R)-2,3-dihydroxy-3-methylpentanoate + NADP(+) = (S)-2-ethyl-2-hydroxy-3-oxobutanoate + NADPH + H(+). It functions in the pathway amino-acid biosynthesis; L-isoleucine biosynthesis; L-isoleucine from 2-oxobutanoate: step 2/4. It participates in amino-acid biosynthesis; L-valine biosynthesis; L-valine from pyruvate: step 2/4. Involved in the biosynthesis of branched-chain amino acids (BCAA). Catalyzes an alkyl-migration followed by a ketol-acid reduction of (S)-2-acetolactate (S2AL) to yield (R)-2,3-dihydroxy-isovalerate. In the isomerase reaction, S2AL is rearranged via a Mg-dependent methyl migration to produce 3-hydroxy-3-methyl-2-ketobutyrate (HMKB). In the reductase reaction, this 2-ketoacid undergoes a metal-dependent reduction by NADPH to yield (R)-2,3-dihydroxy-isovalerate. This Cereibacter sphaeroides (strain ATCC 17023 / DSM 158 / JCM 6121 / CCUG 31486 / LMG 2827 / NBRC 12203 / NCIMB 8253 / ATH 2.4.1.) (Rhodobacter sphaeroides) protein is Ketol-acid reductoisomerase (NADP(+)).